An 843-amino-acid polypeptide reads, in one-letter code: Vacuolar membrane protease (843 aa).

Residues 1-16 lie on the Cytoplasmic side of the membrane; sequence MTNSRRHIFERICAKA. A helical transmembrane segment spans residues 17–37; the sequence is FQSSLTCSIFGFTVLLILYLL. Residues 38-347 lie on the Vacuolar side of the membrane; that stretch reads DWKRIAQVPG…LAFGKYWQLN (310 aa). Residues Asn-96, Asn-109, and Asn-117 are each glycosylated (N-linked (GlcNAc...) asparagine). Zn(2+) contacts are provided by His-147 and Asp-159. The Proton acceptor role is filled by Glu-191. Glu-192 provides a ligand contact to Zn(2+). Residue Asn-209 is glycosylated (N-linked (GlcNAc...) asparagine). Glu-217 serves as a coordination point for Zn(2+). Residue Asn-275 is glycosylated (N-linked (GlcNAc...) asparagine). A Zn(2+)-binding site is contributed by His-292. N-linked (GlcNAc...) asparagine glycosylation is present at Asn-322. The helical transmembrane segment at 348–368 threads the bilayer; that stretch reads LPIYQVLNIIFAVICPIVLLL. The Cytoplasmic portion of the chain corresponds to 369–386; sequence TLIRFPSLYEQLKKPRYT. The chain crosses the membrane as a helical span at residues 387-407; the sequence is VCFVVSCIFVSIFDTLTVLLL. The Vacuolar portion of the chain corresponds to 408-417; it reads TWINPYVINS. The chain crosses the membrane as a helical span at residues 418–438; the sequence is HTGLILALFYLTNLIALAFSF. The Cytoplasmic segment spans residues 439–456; that stretch reads RAAATHSKLSSEDLSSIE. The helical transmembrane segment at 457-477 threads the bilayer; it reads IVFIWYAQILWYLVFIVSVIL. Over 478-484 the chain is Vacuolar; sequence SIYFQLG. A helical membrane pass occupies residues 485 to 505; sequence STYWVTLSYLCTFTCCIMTII. The Cytoplasmic portion of the chain corresponds to 506–566; that stretch reads RINYFVDNVV…NRAHVKLIDN (61 aa). A helical transmembrane segment spans residues 567-587; sequence IWTVIYFIFNVPFPVFLCYDI. At 588-608 the chain is on the vacuolar side; sequence LVETILPAGSQTLTDSVFSSK. The chain crosses the membrane as a helical span at residues 609–629; sequence LYKLVIFVVFLSLVNSGPFIF. Residues 630–636 are Cytoplasmic-facing; it reads RALSKKS. The helical transmembrane segment at 637–657 threads the bilayer; sequence LAVLTMLWITLFVQALSVNPF. Topologically, residues 658-843 are vacuolar; that stretch reads TESAPLKLSF…LLKVKSSIVI (186 aa). 5 N-linked (GlcNAc...) asparagine glycosylation sites follow: Asn-677, Asn-703, Asn-707, Asn-754, and Asn-788.

Belongs to the peptidase M28 family. Zn(2+) serves as cofactor.

The protein resides in the membrane. It is found in the vacuole membrane. Functionally, may be involved in vacuolar sorting and osmoregulation. The protein is Vacuolar membrane protease of Schizosaccharomyces pombe (strain 972 / ATCC 24843) (Fission yeast).